The following is a 739-amino-acid chain: Probable endo-1,3(4)-beta-glucanase An02g00850 (739 aa).

Positions 1–24 (MPTSTLLWSVGSLALSSMVLPAAA) are cleaved as a signal peptide. The region spanning 31 to 283 (ETWKGEDFLT…WAGGVYSTSG (253 aa)) is the GH16 domain. Residues Asn-59 and Asn-74 are each glycosylated (N-linked (GlcNAc...) asparagine). Catalysis depends on Glu-140, which acts as the Nucleophile. The active-site Proton donor is Glu-145. Asn-396 carries an N-linked (GlcNAc...) asparagine glycan. 3 stretches are compositionally biased toward low complexity: residues 431-442 (SEATEASNSEGS), 452-499 (TGAS…AGAT), and 507-522 (GASG…SAAA). The disordered stretch occupies residues 431 to 718 (SEATEASNSE…TPSTPVFTGG (288 aa)). Asn-459 and Asn-482 each carry an N-linked (GlcNAc...) asparagine glycan. The span at 523-532 (TPSNVSSTGA) shows a compositional bias: polar residues. Residues Asn-526 and Asn-537 are each glycosylated (N-linked (GlcNAc...) asparagine). Polar residues predominate over residues 539–548 (SEDSSASSEA). Residues 561 to 587 (GASAEANGNDSASSNAATASNVSGASA) are compositionally biased toward low complexity. Residues Asn-569, Asn-581, Asn-592, and Asn-620 are each glycosylated (N-linked (GlcNAc...) asparagine). Residues 597–641 (ASAGANAGSSAAPSSVSGASAEANGSEGSSSHSSGSQAGAHSYGS) are compositionally biased toward low complexity. Over residues 654–673 (PSSSSHAFATAPSSTGSSRV) the composition is skewed to polar residues. Low complexity predominate over residues 674–713 (PTSAAAANNAAAATQGSSASGSNSGSSGHGSSSATTPSTP). The GPI-anchor amidated glycine moiety is linked to residue Gly-717. A propeptide spans 718 to 739 (GANKLTLGASSVLSVLAFALLA) (removed in mature form).

This sequence belongs to the glycosyl hydrolase 16 family.

Its subcellular location is the cell membrane. The catalysed reaction is Endohydrolysis of (1-&gt;3)- or (1-&gt;4)-linkages in beta-D-glucans when the glucose residue whose reducing group is involved in the linkage to be hydrolyzed is itself substituted at C-3.. Mixed-linked glucanase involved in the degradation of complex natural cellulosic substrates. The protein is Probable endo-1,3(4)-beta-glucanase An02g00850 of Aspergillus niger (strain ATCC MYA-4892 / CBS 513.88 / FGSC A1513).